The sequence spans 607 residues: UvrABC system protein C (607 aa).

In terms of domain architecture, GIY-YIG spans Gly-16–Ile-94. The UVR domain maps to Asn-203 to Val-238.

The protein belongs to the UvrC family. In terms of assembly, interacts with UvrB in an incision complex.

The protein localises to the cytoplasm. Its function is as follows. The UvrABC repair system catalyzes the recognition and processing of DNA lesions. UvrC both incises the 5' and 3' sides of the lesion. The N-terminal half is responsible for the 3' incision and the C-terminal half is responsible for the 5' incision. This Pseudomonas savastanoi pv. phaseolicola (strain 1448A / Race 6) (Pseudomonas syringae pv. phaseolicola (strain 1448A / Race 6)) protein is UvrABC system protein C.